The following is a 337-amino-acid chain: Anthranilate phosphoribosyltransferase (337 aa).

5-phospho-alpha-D-ribose 1-diphosphate-binding positions include Gly-80, 83–84 (GD), Thr-88, 90–93 (NIST), 108–116 (KHGNRAVSS), and Ser-120. Gly-80 is an anthranilate binding site. Ser-92 is a Mg(2+) binding site. An anthranilate-binding site is contributed by Asn-111. Residue Arg-166 participates in anthranilate binding. Residues Asp-224 and Glu-225 each coordinate Mg(2+).

Belongs to the anthranilate phosphoribosyltransferase family. In terms of assembly, homodimer. Requires Mg(2+) as cofactor.

It catalyses the reaction N-(5-phospho-beta-D-ribosyl)anthranilate + diphosphate = 5-phospho-alpha-D-ribose 1-diphosphate + anthranilate. The protein operates within amino-acid biosynthesis; L-tryptophan biosynthesis; L-tryptophan from chorismate: step 2/5. Its function is as follows. Catalyzes the transfer of the phosphoribosyl group of 5-phosphorylribose-1-pyrophosphate (PRPP) to anthranilate to yield N-(5'-phosphoribosyl)-anthranilate (PRA). The sequence is that of Anthranilate phosphoribosyltransferase from Anaeromyxobacter sp. (strain Fw109-5).